A 526-amino-acid chain; its full sequence is NAD(P)H-quinone oxidoreductase subunit 2 (526 aa).

The next 14 membrane-spanning stretches (helical) occupy residues 16 to 36 (ILPE…DLIV), 43 to 63 (WIPY…YLGW), 80 to 100 (LSIL…MMSV), 107 to 127 (GTAL…GMFL), 133 to 153 (LVMI…LTGY), 168 to 188 (LLIG…LYGL), 211 to 231 (LALA…ISAV), 245 to 265 (PTPV…ALAI), 279 to 299 (WHFI…VVAL), 307 to 327 (MLAY…VAGT), 335 to 355 (IFYL…VILF), 379 to 399 (LGLS…GFFG), 401 to 421 (IYLF…LGLI), and 469 to 489 (LVLS…LFVI).

It belongs to the complex I subunit 2 family. As to quaternary structure, NDH-1 can be composed of about 15 different subunits; different subcomplexes with different compositions have been identified which probably have different functions.

The protein resides in the cellular thylakoid membrane. It catalyses the reaction a plastoquinone + NADH + (n+1) H(+)(in) = a plastoquinol + NAD(+) + n H(+)(out). The enzyme catalyses a plastoquinone + NADPH + (n+1) H(+)(in) = a plastoquinol + NADP(+) + n H(+)(out). Functionally, NDH-1 shuttles electrons from an unknown electron donor, via FMN and iron-sulfur (Fe-S) centers, to quinones in the respiratory and/or the photosynthetic chain. The immediate electron acceptor for the enzyme in this species is believed to be plastoquinone. Couples the redox reaction to proton translocation, and thus conserves the redox energy in a proton gradient. Cyanobacterial NDH-1 also plays a role in inorganic carbon-concentration. The protein is NAD(P)H-quinone oxidoreductase subunit 2 of Picosynechococcus sp. (strain ATCC 27264 / PCC 7002 / PR-6) (Agmenellum quadruplicatum).